Consider the following 321-residue polypeptide: UPF0676 protein C1494.01 (321 aa).

The region spanning 159–267 (EEDVLRLLKY…RQTIAYFVTP (109 aa)) is the Fe2OG dioxygenase domain.

It belongs to the UPF0676 family.

Its subcellular location is the cytoplasm. It is found in the nucleus. The sequence is that of UPF0676 protein C1494.01 from Schizosaccharomyces pombe (strain 972 / ATCC 24843) (Fission yeast).